A 511-amino-acid polypeptide reads, in one-letter code: Sodium/proline symporter (511 aa).

The next 13 membrane-spanning stretches (helical) occupy residues W16–G36, I54–M74, L85–V105, I139–S159, G175–V195, D199–L219, V246–I266, L284–I304, I327–S347, F381–W401, I407–L427, A438–I458, and F467–V487.

Belongs to the sodium:solute symporter (SSF) (TC 2.A.21) family.

The protein resides in the cell membrane. The enzyme catalyses L-proline(in) + Na(+)(in) = L-proline(out) + Na(+)(out). Catalyzes the sodium-dependent uptake of extracellular L-proline. This Staphylococcus epidermidis (strain ATCC 12228 / FDA PCI 1200) protein is Sodium/proline symporter (putP).